The chain runs to 3037 residues: Genome polyprotein (3037 aa).

S2 is modified (N-acetylserine; by host). The interval 2-23 (STNPKPQRKTKRNTNRRPQDVK) is interaction with STAT1. Residues 2 to 58 (STNPKPQRKTKRNTNRRPQDVKFPGGGQIVGGVYLLPRRGPRLGVRAARKTSERSQP) form an interaction with EIF2AK2/PKR region. Residues 2–59 (STNPKPQRKTKRNTNRRPQDVKFPGGGQIVGGVYLLPRRGPRLGVRAARKTSERSQPR) form an interaction with DDX3X region. Positions 2-75 (STNPKPQRKT…PKDRRSTGKS (74 aa)) are disordered. At 2–168 (STNPKPQRKT…EDGINYATGN (167 aa)) the chain is on the cytoplasmic side. 2 consecutive short sequence motifs (nuclear localization signal) follow at residues 5-13 (PKPQRKTKR) and 38-43 (PRRGPR). The segment covering 7–16 (PQRKTKRNTN) has biased composition (basic residues). Over residues 32–47 (GGVYLLPRRGPRLGVR) the composition is skewed to low complexity. At S53 the chain carries Phosphoserine; by host. 2 short sequence motifs (nuclear localization signal) span residues 58-64 (PRGRRQP) and 66-71 (PKDRRS). A phosphoserine; by host mark is found at S99 and S116. An important for endoplasmic reticulum and mitochondrial localization region spans residues 112–152 (PRHKSRNLGKVIDTLTCGFADLMGYIPVVGAPVGGVARALA). The tract at residues 122 to 173 (VIDTLTCGFADLMGYIPVVGAPVGGVARALAHGVRVLEDGINYATGNLPGCS) is interaction with APOA2. Residues 164–167 (YATG) form an important for lipid droplets localization region. The helical transmembrane segment at 169 to 189 (LPGCSFSIFLLALLSCISVPV) threads the bilayer. A propeptide spans 178–191 (LLALLSCISVPVSA) (ER anchor for the core protein, removed in mature form by host signal peptidase). Topologically, residues 190-358 (SAVEVRNTSS…TGGHWGVMFG (169 aa)) are lumenal. Residues N196, N209, and N234 are each glycosylated (N-linked (GlcNAc...) asparagine; by host). Residues 265–296 (IVMSATLCSALYVGDVCGALMIAAQVVVVSPQ) are important for fusion. N-linked (GlcNAc...) asparagine; by host glycosylation is present at N305. Residues 359–379 (LAYFSMQGAWAKVVVILLLTA) form a helical membrane-spanning segment. Over 380–729 (GVEASTYTTG…WEWVVLLFLL (350 aa)) the chain is Lumenal. An HVR1 region spans residues 385–412 (TYTTGAVVGRSTHLFTSMFSLGSQQRVQ). N-linked (GlcNAc...) (high mannose) asparagine; by host glycans are attached at residues N417, N423, and N430. Cystine bridges form between C429–C554, C452–C459, C488–C496, and C505–C510. N448 carries an N-linked (GlcNAc...) asparagine; by host glycan. Positions 475–480 (EESVTN) are HVR2. The segment at 482–495 (ADMRPYCWHYPPRP) is CD81-binding 1. N534 carries N-linked (GlcNAc...) asparagine; by host glycosylation. A CD81-binding 2 region spans residues 546 to 553 (PPKGAWFG). N-linked (GlcNAc...) asparagine; by host glycosylation occurs at N558. 4 disulfide bridges follow: C566/C571, C585/C589, C601/C624, and C611/C648. N627 and N649 each carry an N-linked (GlcNAc...) (high mannose) asparagine; by host glycan. Residues C656 and C681 are joined by a disulfide bond. The PKR/eIF2-alpha phosphorylation homology domain (PePHD) stretch occupies residues 664–675 (SQLSPLLHSTTE). A helical membrane pass occupies residues 730–750 (LADARVCACLWMLLLLGQAEA). Over 751–761 (ALEKLVILHAA) the chain is Lumenal. A helical membrane pass occupies residues 762 to 782 (SAASSNGLLYFILFFVAAWCI). Residues 783–786 (KGRA) are Cytoplasmic-facing. The helical transmembrane segment at 787-807 (VPMVTYTLLGCWSFVLLLMAL) threads the bilayer. The Lumenal portion of the chain corresponds to 808-817 (PHQAYALDAA). The helical transmembrane segment at 818–838 (EQGQIGMALLIAITAFTITPA) threads the bilayer. Topologically, residues 839–885 (YKILLSRCLWWTCYMLVLAEALIQDWIPPLQARGGRDGVIWAMTMFY) are cytoplasmic. Residues 886–906 (PGVVFDITKWLLAILGPGYLF) traverse the membrane as a helical segment. The region spanning 905-1030 (LFRAAVMRTP…GYTSKGWRLL (126 aa)) is the Peptidase C18 domain. The Lumenal portion of the chain corresponds to 907–932 (RAAVMRTPYFVRANALLRMCALVKQL). The protease NS2-3 stretch occupies residues 908-1210 (AAVMRTPYFV…PVESLDVVTR (303 aa)). A lipid anchor (S-palmitoyl cysteine; by host) is attached at C926. The helical transmembrane segment at 933-953 (AGGKYVQVALITLGKWTGTYI) threads the bilayer. An interaction with host SCPS1 region spans residues 933-953 (AGGKYVQVALITLGKWTGTYI). Residues 954–1661 (YDHLSPMSDW…CMQADLEIMT (708 aa)) are Cytoplasmic-facing. Residues H956, E976, and C997 each act as for protease NS2 activity; shared with dimeric partner in the active site. The Peptidase S29 domain maps to 1031-1212 (APITAYAQQT…ESLDVVTRSP (182 aa)). Active-site charge relay system; for serine protease NS3 activity residues include H1087 and D1111. Zn(2+)-binding residues include C1127 and C1129. The active-site Charge relay system; for serine protease NS3 activity is S1169. Residues C1175 and H1179 each coordinate Zn(2+). In terms of domain architecture, Helicase ATP-binding spans 1221-1373 (PAVPQTYQVG…PNIEEVALGH (153 aa)). 1234–1241 (APTGSGKS) is a binding site for ATP. The Mg(2+) site is built by S1241 and E1321. Residues 1320 to 1323 (DECH) carry the DECH box motif. The RNA-binding stretch occupies residues 1490–1502 (QRRGRTGRGRLGI). A helical membrane pass occupies residues 1662 to 1682 (STWVLAGGVLAAVAAYCLATG). Residues 1683–1694 (CVSIIGRIHVNQ) form an NS3-binding region. The Cytoplasmic portion of the chain corresponds to 1683-1809 (CVSIIGRIHV…ALTSPLSTST (127 aa)). The helical transmembrane segment at 1810 to 1830 (TILLNIMGGWLASQIAPPAGA) threads the bilayer. At 1831-1832 (TG) the chain is on the lumenal side. Residues 1833–1853 (FVVSGLVGAAVGSIGLGKILV) traverse the membrane as a helical segment. A topological domain (cytoplasmic) is located at residue D1854. A helical transmembrane segment spans residues 1855-1875 (VLAGYGAGISGALVAFKIMSG). At 1876-1885 (EKPSVEDVVN) the chain is on the lumenal side. The helical transmembrane segment at 1886-1906 (LLPAILSPGALVVGVICAAIL) threads the bilayer. The Cytoplasmic segment spans residues 1907–1976 (RRHVGQGEGA…WITEDCPVPC (70 aa)). A lipid anchor (S-palmitoyl cysteine; by host) is attached at C1976. Residues 1977–2006 (SGSWLRDVWDWVCSILIDFKNWLSAKLFPR) lie within the membrane without spanning it. Over 2007–3016 (LPGIPFISCQ…YHSVSRARPR (1010 aa)) the chain is Cytoplasmic. Positions 2015, 2033, 2035, and 2056 each coordinate Zn(2+). Residues 2124–2212 (EFFSWVDGVQ…ASSSASQLSA (89 aa)) form an FKBP8-binding region. Residues 2124 to 2336 (EFFSWVDGVQ…PVPPPRRRRA (213 aa)) form a transcriptional activation region. The tract at residues 2139–2143 (PTPKA) is interaction with non-structural protein 4A. Residues 2193-2464 (RLARGSPPSA…ALITPCSPEE (272 aa)) form an interaction with host SKP2 region. Residues S2198, S2201, S2205, S2208, S2211, and S2214 each carry the phosphoserine; by host modification. The segment at 2214-2253 (SLRATCTTHAKCPDIDMVDANLFCWCTMGGNMTRIESESK) is ISDR. Residues 2214-2279 (SLRATCTTHA…REPSIPSEYL (66 aa)) form an interaction with EIF2AK2/PKR region. The segment at 2253 to 2310 (KVLMVDSFDPVVDKEDEREPSIPSEYLLPKSRFPPALPPWARPDYNPPLLETWKRPDY) is NS4B-binding. Positions 2303–2381 (ETWKRPDYQP…GTTGETSKSP (79 aa)) are V3. Positions 2326-2329 (TPVP) match the SH3-binding motif. Residues 2331–2339 (PRRRRAVVL) carry the Nuclear localization signal motif. K2354 participates in a covalent cross-link: Glycyl lysine isopeptide (Lys-Gly) (interchain with G-Cter in ubiquitin). A disordered region spans residues 2354–2434 (KSFGCPPPSG…APGSDSGSWS (81 aa)). The span at 2402-2411 (EPGDPDLEPE) shows a compositional bias: acidic residues. 2 positions are modified to phosphoserine; by host: S2475 and S2488. A RdRp catalytic domain is found at 2660 to 2778 (PMGFSYDTRC…ISESQGVEED (119 aa)). Positions 2666, 2764, and 2765 each coordinate Mg(2+). The chain crosses the membrane as a helical span at residues 3017 to 3037 (LLLLGLLLLCVGVGIFLLPAR).

It belongs to the hepacivirus polyprotein family. In terms of assembly, homooligomer. Interacts with E1 (via C-terminus). Interacts with the non-structural protein 5A. Interacts (via N-terminus) with host STAT1 (via SH2 domain); this interaction results in decreased STAT1 phosphorylation and ubiquitin-mediated proteasome-dependent STAT1 degradation, leading to decreased IFN-stimulated gene transcription. Interacts with host STAT3; this interaction constitutively activates STAT3. Interacts with host LTBR receptor. Interacts with host TNFRSF1A receptor and possibly induces apoptosis. Interacts with host HNRPK. Interacts with host YWHAE. Interacts with host UBE3A/E6AP. Interacts with host DDX3X. Interacts with host APOA2. Interacts with host RXRA protein. Interacts with host SP110 isoform 3/Sp110b; this interaction sequesters the transcriptional corepressor SP110 away from the nucleus. Interacts with host CREB3 nuclear transcription protein; this interaction triggers cell transformation. Interacts with host ACY3. Interacts with host C1QR1. Interacts with host RBM24; this interaction, which enhances the interaction of the mature core protein with 5'-UTR, may inhibit viral translation and favor replication. Interacts with host EIF2AK2/PKR; this interaction induces the autophosphorylation of EIF2AK2. Part of the viral assembly initiation complex composed of NS2, E1, E2, NS3, NS4A, NS5A and the mature core protein. Forms a heterodimer with envelope glycoprotein E2. Interacts with mature core protein. Interacts with protease NS2. The heterodimer E1/E2 interacts with host CLDN1; this interaction plays a role in viral entry into host cell. Interacts with host SPSB2 (via C-terminus). Part of the viral assembly initiation complex composed of NS2, E1, E2, NS3, NS4A, NS5A and the mature core protein. Interacts with host NEURL3; this interaction prevents E1 binding to glycoprotein E2. As to quaternary structure, forms a heterodimer with envelope glycoprotein E1. Interacts with host CD81 and SCARB1 receptors; these interactions play a role in viral entry into host cell. Interacts with host EIF2AK2/PKR; this interaction inhibits EIF2AK2 and probably allows the virus to evade the innate immune response. Interacts with host CD209/DC-SIGN and CLEC4M/DC-SIGNR. Interact with host SPCS1; this interaction is essential for viral particle assembly. Interacts with protease NS2. The heterodimer E1/E2 interacts with host CLDN1; this interaction plays a role in viral entry into host cell. Part of the viral assembly initiation complex composed of NS2, E1, E2, NS3, NS4A, NS5A and the mature core protein. Interacts with host SLC3A2/4F2hc; the interaction may facilitate viral entry into host cell. Interacts with human PLSCR1. In terms of assembly, homohexamer. Homoheptamer. Interacts with protease NS2. Homodimer. Interacts with host SPCS1; this interaction is essential for viral particle assembly. Interacts with envelope glycoprotein E1. Interacts with envelope glycoprotein E2. Interacts with viroporin p7. Interacts with serine protease/helicase NS3. Part of the replication complex composed of NS2, NS3, NS4A, NS4B, NS5A and the RNA-directed RNA polymerase embedded in an ER-derived membranous web. Part of the viral assembly initiation complex composed of NS2, E1, E2, NS3, NS4A, NS5A and the mature core protein. As to quaternary structure, interacts with protease NS2. Interacts with non-structural protein 4A; this interaction stabilizes the folding of NS3 serine protease. NS3-NS4A interaction is essential for NS3 activation and allows membrane anchorage of the latter. NS3/NS4A complex also prevents phosphorylation of host IRF3, thus preventing the establishment of dsRNA induced antiviral state. Interacts with host MAVS; this interaction leads to the cleavage and inhibition of host MAVS. Interacts with host TICAM1; this interaction leads to the cleavage and inhibition of host TICAM1. Interacts with host TANK-binding kinase/TBK1; this interaction results in the inhibition of the association between TBK1 and IRF3, which leads to the inhibition of IRF3 activation. Interacts with host RBM24. Part of the replication complex composed of NS2, NS3, NS4A, NS4B, NS5A and the RNA-directed RNA polymerase embedded in an ER-derived membranous web. Part of the viral assembly initiation complex composed of NS2, E1, E2, NS3, NS4A, NS5A and the mature core protein. In terms of assembly, interacts with NS3 serine protease; this interaction stabilizes the folding of NS3 serine protease. NS3-NS4A interaction is essential for NS3 activation and allows membrane anchorage of the latter. Interacts with non-structural protein 5A (via N-terminus). Part of the replication complex composed of NS2, NS3, NS4A, NS4B, NS5A and the RNA-directed RNA polymerase embedded in an ER-derived membranous web. Part of the viral assembly initiation complex composed of NS2, E1, E2, NS3, NS4A, NS5A and the mature core protein. Homomultimer. Interacts with non-structural protein NS5A. Interacts with host PLA2G4C; this interaction likely initiates the recruitment of replication complexes to lipid droplets. Interacts with host STING; this interaction disrupts the interaction between STING and TBK1 thereby suppressing the interferon signaling. Part of the replication complex composed of NS2, NS3, NS4A, NS4B, NS5A and the RNA-directed RNA polymerase embedded in an ER-derived membranous web. As to quaternary structure, monomer. Homodimer; dimerization is required for RNA-binding. Interacts with the mature core protein. Interacts (via N-terminus) with non-structural protein 4A. Interacts with non-structural protein 4B. Interacts (via region D2) with RNA-directed RNA polymerase. Part of the viral assembly initiation complex composed of NS2, E1, E2, NS3, NS4A, NS5A and the mature core protein. Part of the replication complex composed of NS2, NS3, NS4A, NS4B, NS5A and the RNA-directed RNA polymerase embedded in an ER-derived membranous web. Interacts with host GRB2. Interacts with host BIN1. Interacts with host PIK3R1. Interacts with host SRCAP. Interacts with host FKBP8. Interacts (via C-terminus) with host VAPB (via MSP domain). Interacts with host EIF2AK2/PKR; this interaction leads to disruption of EIF2AK2 dimerization by NS5A and probably allows the virus to evade the innate immune response. Interacts (via N-terminus) with host PACSIN2 (via N-terminus); this interaction attenuates protein kinase C alpha-mediated phosphorylation of PACSIN2 by disrupting the interaction between PACSIN2 and PRKCA. Interacts (via N-terminus) with host SRC kinase (via SH2 domain). Interacts with most Src-family kinases. Interacts with host IFI27 and SKP2; promotes the ubiquitin-mediated proteasomal degradation of NS5A. Interacts with host GPS2. Interacts with host TNFRSF21; this interaction allows the modulation by the virus of JNK, p38 MAPK, STAT3, and Akt signaling pathways in a DR6-dependent manner. Interacts (via N-terminus) with host CIDEB (via N-terminus); this interaction seems to regulate the association of HCV particles with APOE. Interacts with host CHKA/Choline Kinase-alpha; CHKA bridges host PI4KA and NS5A and potentiates NS5A-stimulated PI4KA activity, which then facilitates the targeting of the ternary complex to the ER for viral replication. Interacts with host SPSB2 (via C-terminus); this interaction targets NS5A for ubiquitination and degradation. Interacts with host RAB18; this interaction may promote the association of NS5A and other replicase components with lipid droplets. Interacts (via region D2) with host PPIA/CYPA; the interaction stimulates RNA-binding ability of NS5A and is dependent on the peptidyl-prolyl cis-trans isomerase activity of PPIA/CYPA. Interacts with host TRIM14; this interaction induces the degradation of NS5A. In terms of assembly, homooligomer. Interacts with non-structural protein 5A. Interacts with host VAPB. Interacts with host PRK2/PKN2. Interacts with host HNRNPA1 and SEPT6; these interactions facilitate viral replication. Part of the replication complex composed of NS2, NS3, NS4A, NS4B, NS5A and the RNA-directed RNA polymerase. Requires Zn(2+) as cofactor. The cofactor is Mg(2+). Post-translationally, specific enzymatic cleavages in vivo yield mature proteins. The structural proteins, core, E1, E2 and p7 are produced by proteolytic processing by host signal peptidases. The core protein precursor is synthesized as a 23 kDa, which is retained in the ER membrane through the hydrophobic signal peptide. Cleavage by the signal peptidase releases the 21 kDa mature core protein. The cleavage of the core protein precursor occurs between aminoacids 176 and 188 but the exact cleavage site is not known. Some degraded forms of the core protein appear as well during the course of infection. The other proteins (p7, NS2, NS3, NS4A, NS4B, NS5A and NS5B) are cleaved by the viral proteases. Autoprocessing between NS2 and NS3 is mediated by the NS2 cysteine protease catalytic domain and regulated by the NS3 N-terminal domain. In terms of processing, phosphorylated by host PKC and PKA. Ubiquitinated; mediated by UBE3A and leading to core protein subsequent proteasomal degradation. Post-translationally, highly N-glycosylated. In terms of processing, palmitoylation is required for NS2/3 autoprocessing and E2 recruitment to membranes. Palmitoylated. This modification may play a role in its polymerization or in protein-protein interactions. Post-translationally, phosphorylated on serines in a basal form termed p56. p58 is a hyperphosphorylated form of p56. p56 and p58 coexist in the cell in roughly equivalent amounts. Hyperphosphorylation is dependent on the presence of NS4A. Host CSNK1A1/CKI-alpha or RPS6KB1 kinases may be responsible for NS5A phosphorylation. In terms of processing, tyrosine phosphorylation is essential for the interaction with host SRC. The N-terminus is phosphorylated by host PRK2/PKN2.

Its subcellular location is the host endoplasmic reticulum membrane. It localises to the host mitochondrion membrane. The protein resides in the virion. It is found in the host cytoplasm. The protein localises to the host nucleus. Its subcellular location is the host lipid droplet. It localises to the virion membrane. The protein resides in the host mitochondrion. It is found in the host cell membrane. The protein localises to the host perinuclear region. The catalysed reaction is Hydrolysis of four peptide bonds in the viral precursor polyprotein, commonly with Asp or Glu in the P6 position, Cys or Thr in P1 and Ser or Ala in P1'.. It carries out the reaction a ribonucleoside 5'-triphosphate + H2O = a ribonucleoside 5'-diphosphate + phosphate + H(+). It catalyses the reaction ATP + H2O = ADP + phosphate + H(+). The enzyme catalyses RNA(n) + a ribonucleoside 5'-triphosphate = RNA(n+1) + diphosphate. Its activity is regulated as follows. Inhibited by the antiviral drug hexamethylene amiloride. Inhibition by amantadine appears to be genotype-dependent. Also inhibited by long-alkyl-chain iminosugar derivatives. With respect to regulation, activity is up-regulated by PRK2/PKN2-mediated phosphorylation. Packages viral RNA to form a viral nucleocapsid, and promotes virion budding. Participates in the viral particle production as a result of its interaction with the non-structural protein 5A. Binds RNA and may function as a RNA chaperone to induce the RNA structural rearrangements taking place during virus replication. Modulates viral translation initiation by interacting with viral IRES and 40S ribosomal subunit. Affects various cell signaling pathways, host immunity and lipid metabolism. Prevents the establishment of cellular antiviral state by blocking the interferon-alpha/beta (IFN-alpha/beta) and IFN-gamma signaling pathways and by blocking the formation of phosphorylated STAT1 and promoting ubiquitin-mediated proteasome-dependent degradation of STAT1. Activates STAT3 leading to cellular transformation. Regulates the activity of cellular genes, including c-myc and c-fos. May repress the promoter of p53, and sequester CREB3 and SP110 isoform 3/Sp110b in the cytoplasm. Represses cell cycle negative regulating factor CDKN1A, thereby interrupting an important check point of normal cell cycle regulation. Targets transcription factors involved in the regulation of inflammatory responses and in the immune response: suppresses TNF-induced NF-kappa-B activation, and activates AP-1. Binds to dendritic cells (DCs) via C1QR1, resulting in down-regulation of T-lymphocytes proliferation. Alters lipid metabolism by interacting with hepatocellular proteins involved in lipid accumulation and storage. Induces up-regulation of FAS promoter activity, and thereby contributes to the increased triglyceride accumulation in hepatocytes (steatosis). Its function is as follows. Forms a heterodimer with envelope glycoprotein E2, which mediates virus attachment to the host cell, virion internalization through clathrin-dependent endocytosis and fusion with host membrane. Fusion with the host cell is most likely mediated by both E1 and E2, through conformational rearrangements of the heterodimer required for fusion rather than a classical class II fusion mechanism. E1/E2 heterodimer binds host apolipoproteins such as APOB and ApoE thereby forming a lipo-viro-particle (LVP). APOE associated to the LVP allows the initial virus attachment to cell surface receptors such as the heparan sulfate proteoglycans (HSPGs), syndecan-1 (SDC1), syndecan-1 (SDC2), the low-density lipoprotein receptor (LDLR) and scavenger receptor class B type I (SCARB1). The cholesterol transfer activity of SCARB1 allows E2 exposure and binding of E2 to SCARB1 and the tetraspanin CD81. E1/E2 heterodimer binding on CD81 activates the epithelial growth factor receptor (EGFR) signaling pathway. Diffusion of the complex E1-E2-EGFR-SCARB1-CD81 to the cell lateral membrane allows further interaction with Claudin 1 (CLDN1) and occludin (OCLN) to finally trigger HCV entry. In terms of biological role, forms a heterodimer with envelope glycoprotein E1, which mediates virus attachment to the host cell, virion internalization through clathrin-dependent endocytosis and fusion with host membrane. Fusion with the host cell is most likely mediated by both E1 and E2, through conformational rearrangements of the heterodimer required for fusion rather than a classical class II fusion mechanism. The interaction between envelope glycoprotein E2 and host apolipoprotein E/APOE allows the proper assembly, maturation and infectivity of the viral particles. This interaction is probably promoted via the up-regulation of cellular autophagy by the virus. E1/E2 heterodimer binds host apolipoproteins such as APOB and APOE thereby forming a lipo-viro-particle (LVP). APOE associated to the LVP allows the initial virus attachment to cell surface receptors such as the heparan sulfate proteoglycans (HSPGs), syndecan-1 (SDC1), syndecan-1 (SDC2), the low-density lipoprotein receptor (LDLR) and scavenger receptor class B type I (SCARB1). The cholesterol transfer activity of SCARB1 allows E2 exposure and binding of E2 to SCARB1 and the tetraspanin CD81. E1/E2 heterodimer binding on CD81 activates the epithelial growth factor receptor (EGFR) signaling pathway. Diffusion of the complex E1-E2-EGFR-SCARB1-CD81 to the cell lateral membrane allows further interaction with Claudin 1 (CLDN1) and occludin (OCLN) to finally trigger HCV entry. Inhibits host EIF2AK2/PKR activation, preventing the establishment of an antiviral state. Viral ligand for CD209/DC-SIGN and CLEC4M/DC-SIGNR, which are respectively found on dendritic cells (DCs), and on liver sinusoidal endothelial cells and macrophage-like cells of lymph node sinuses. These interactions allow the capture of circulating HCV particles by these cells and subsequent facilitated transmission to permissive cells such as hepatocytes and lymphocyte subpopulations. The interaction between E2 and host amino acid transporter complex formed by SLC3A2 and SLC7A5/LAT1 may facilitate viral entry into host cell. Functionally, ion channel protein that acts as a viroporin and plays an essential role in the assembly, envelopment and secretion of viral particles. Regulates the host cell secretory pathway, which induces the intracellular retention of viral glycoproteins and favors assembly of viral particles. Creates a pore in acidic organelles and releases Ca(2+) and H(+) in the cytoplasm of infected cells, leading to a productive viral infection. High levels of cytoplasmic Ca(2+) may trigger membrane trafficking and transport of viral ER-associated proteins to viroplasms, sites of viral genome replication. This ionic imbalance induces the assembly of the inflammasome complex, which triggers the maturation of pro-IL-1beta into IL-1beta through the action of caspase-1. Targets also host mitochondria and induces mitochondrial depolarization. In addition of its role as a viroporin, acts as a lipid raft adhesion factor. Cysteine protease required for the proteolytic auto-cleavage between the non-structural proteins NS2 and NS3. The N-terminus of NS3 is required for the function of NS2 protease (active region NS2-3). Promotes the initiation of viral particle assembly by mediating the interaction between structural and non-structural proteins. Its function is as follows. Displays three enzymatic activities: serine protease with a chymotrypsin-like fold, NTPase and RNA helicase. NS3 serine protease, in association with NS4A, is responsible for the cleavages of NS3-NS4A, NS4A-NS4B, NS4B-NS5A and NS5A-NS5B. The NS3/NS4A complex prevents phosphorylation of host IRF3, thus preventing the establishment of dsRNA induced antiviral state. The NS3/NS4A complex induces host amino acid transporter component SLC3A2, thus contributing to HCV propagation. NS3 RNA helicase binds to RNA and unwinds both dsDNA and dsRNA in the 3' to 5' direction, and likely resolves RNA complicated stable secondary structures in the template strand. Binds a single ATP and catalyzes the unzipping of a single base pair of dsRNA. Inhibits host antiviral proteins TBK1 and IRF3 thereby preventing the establishment of an antiviral state. Cleaves host MAVS/CARDIF thereby preventing the establishment of an antiviral state. Cleaves host TICAM1/TRIF, thereby disrupting TLR3 signaling and preventing the establishment of an antiviral state. In terms of biological role, induces a specific membrane alteration that serves as a scaffold for the virus replication complex. This membrane alteration gives rise to the so-called ER-derived membranous web that contains the replication complex. NS4B self-interaction contributes to its function in membranous web formation. Promotes host TRIF protein degradation in a CASP8-dependent manner thereby inhibiting host TLR3-mediated interferon signaling. Disrupts the interaction between STING and TBK1 contributing to the inhibition of interferon signaling. Functionally, phosphorylated protein that is indispensable for viral replication and assembly. Both hypo- and hyperphosphorylated states are required for the viral life cycle. The hyperphosphorylated form of NS5A is an inhibitor of viral replication. Involved in RNA-binding and especially in binding to the viral genome. Zinc is essential for RNA-binding. Participates in the viral particle production as a result of its interaction with the mature viral core protein. Its interaction with host VAPB may target the viral replication complex to vesicles. Down-regulates viral IRES translation initiation. Mediates interferon resistance, presumably by interacting with and inhibiting host EIF2AK2/PKR. Prevents BIN1-induced apoptosis. Acts as a transcriptional activator of some host genes important for viral replication when localized in the nucleus. Via the interaction with host PACSIN2, modulates lipid droplet formation in order to promote virion assembly. Modulates TNFRSF21/DR6 signaling pathway for viral propagation. RNA-dependent RNA polymerase that performs primer-template recognition and RNA synthesis during viral replication. Initiates RNA transcription/replication at a flavin adenine dinucleotide (FAD), resulting in a 5'- FAD cap on viral RNAs. In this way, recognition of viral 5' RNA by host pattern recognition receptors can be bypassed, thereby evading activation of antiviral pathways. The chain is Genome polyprotein from Hepatitis C virus genotype 2c (isolate BEBE1) (HCV).